A 352-amino-acid polypeptide reads, in one-letter code: DNA polymerase IV (352 aa).

Residues 6–187 (IIHIDADCFY…VPVKFISGIG (182 aa)) form the UmuC domain. Mg(2+) contacts are provided by Asp10 and Asp105. Residue Glu106 is part of the active site.

The protein belongs to the DNA polymerase type-Y family. As to quaternary structure, monomer. The cofactor is Mg(2+).

Its subcellular location is the cytoplasm. The enzyme catalyses DNA(n) + a 2'-deoxyribonucleoside 5'-triphosphate = DNA(n+1) + diphosphate. Its function is as follows. Poorly processive, error-prone DNA polymerase involved in untargeted mutagenesis. Copies undamaged DNA at stalled replication forks, which arise in vivo from mismatched or misaligned primer ends. These misaligned primers can be extended by PolIV. Exhibits no 3'-5' exonuclease (proofreading) activity. May be involved in translesional synthesis, in conjunction with the beta clamp from PolIII. The chain is DNA polymerase IV from Marinomonas sp. (strain MWYL1).